The primary structure comprises 384 residues: G protein-coupled receptor 88 (384 aa).

Residues 1–35 (MTNSSSTSTSTTTGGSLLLLCEEEESWAGRRIPVS) are Extracellular-facing. Asparagine 3 carries an N-linked (GlcNAc...) asparagine glycan. The chain crosses the membrane as a helical span at residues 36-56 (LLYSGLAIGGTLANGMVIYLV). Residues 57–73 (SSFRKLQTTSNAFIVNG) lie on the Cytoplasmic side of the membrane. Residues 74–94 (CAADLSVCALWMPQEAVLGLL) form a helical membrane-spanning segment. Residues 95–116 (PSGSAEPPGDWDGGGGSYRLLR) are Extracellular-facing. A helical membrane pass occupies residues 117-136 (GGLLGLGLTVSLLSHCLVAL). At 137–158 (NRYLLITRAPATYQVLYQRRHT) the chain is on the cytoplasmic side. The helical transmembrane segment at 159 to 179 (VGMLALSWALALGLVLLLPPW) threads the bilayer. Residues 180-195 (APKPGAEPPQVHYPAL) lie on the Extracellular side of the membrane. Residues 196–216 (LAAGALLAQTALLLHCYLGIV) form a helical membrane-spanning segment. Residues 217–285 (RRVRVSVKRV…RAQRRLSGLS (69 aa)) are Cytoplasmic-facing. Residues 286–306 (VLLLCCVFLLATQPLVWVSLA) traverse the membrane as a helical segment. Topologically, residues 307-310 (SGFS) are extracellular. A helical transmembrane segment spans residues 311–331 (LPVPWGVQAASWLLCCALSAL). Residues 332–384 (NPLLYTWRNEEFRRSVRSVLPGVGDAAAAAAAATAVPAMSQAQLGTRAAGQHW) are Cytoplasmic-facing.

It belongs to the G-protein coupled receptor 1 family. In terms of tissue distribution, expressed predominantly in the striatum.

It is found in the cell membrane. Its subcellular location is the cell projection. The protein resides in the cilium membrane. It localises to the cytoplasm. The protein localises to the nucleus. In terms of biological role, orphan G protein-coupled receptor implicated in a large repertoire of behavioral responses that engage motor activities, spatial learning, and emotional processing. May play a role in the regulation of cognitive and motor function. Couples with the heterotrimeric G protein complex of the G(i) subfamily, consisting of GNAI1, GNB1 and GNG2, thereby acting through a G(i)-mediated pathway. Plays a role in the attenuation of D1 dopamine receptor (D1R)-mediated cAMP response in ciliated cells. In on-ciliated cells, involved in the inhibition of the beta-2 adrenergic receptor (B2AR) response. The polypeptide is G protein-coupled receptor 88 (Gpr88) (Mus musculus (Mouse)).